We begin with the raw amino-acid sequence, 453 residues long: Ribosomal protein uS12 methylthiotransferase RimO (453 aa).

The MTTase N-terminal domain occupies 9–124; the sequence is PKIGFVSLGC…VMDAVHKHMP (116 aa). Positions 18, 54, 83, 155, 159, and 162 each coordinate [4Fe-4S] cluster. The Radical SAM core domain occupies 141-382; sequence LTPKHFAYLK…MLLQEEISKK (242 aa). One can recognise a TRAM domain in the interval 385–453; it reads QAKVGKTMRV…ADAHDLWAEA (69 aa).

Belongs to the methylthiotransferase family. RimO subfamily. The cofactor is [4Fe-4S] cluster.

The protein localises to the cytoplasm. The catalysed reaction is L-aspartate(89)-[ribosomal protein uS12]-hydrogen + (sulfur carrier)-SH + AH2 + 2 S-adenosyl-L-methionine = 3-methylsulfanyl-L-aspartate(89)-[ribosomal protein uS12]-hydrogen + (sulfur carrier)-H + 5'-deoxyadenosine + L-methionine + A + S-adenosyl-L-homocysteine + 2 H(+). Catalyzes the methylthiolation of an aspartic acid residue of ribosomal protein uS12. The chain is Ribosomal protein uS12 methylthiotransferase RimO from Janthinobacterium sp. (strain Marseille) (Minibacterium massiliensis).